Consider the following 240-residue polypeptide: Myomodulin neuropeptides 2 (240 aa).

The first 23 residues, 1–23, serve as a signal peptide directing secretion; it reads MWKILETCSCFLVVAVLSGLGKA. The segment at 23-44 is disordered; it reads AQPESFSGSAVTDDSTSGANKR. The propeptide occupies 24-44; that stretch reads QPESFSGSAVTDDSTSGANKR. Positions 26–41 are enriched in polar residues; it reads ESFSGSAVTDDSTSGA. Residues leucine 51 and leucine 60 each carry the leucine amide modification. 2 propeptides (connecting peptide) span residues 72–81 and 84–112; these read SGHQVPMLRA and GSPD…RDQS. At alanine 81 the chain carries Alanine amide. Glutamine 115 carries the post-translational modification Pyrrolidone carboxylic acid. Tyrosine 121 is subject to Tyrosine amide. Propeptides (connecting peptide) lie at residues 124–147, 124–148, 124–149, 124–168, 131–168, 149–168, 150–168, 151–168, 171–190, and 171–199; these read DNNG…SNFD, DNNG…NFDL, DNNG…FDLL, DNNG…GGRY, DLLD…GGRY, LSSL…GGRY, SSLN…GGRY, SLNN…GGRY, SLPD…LVQS, and SLPD…PYSS. At isoleucine 207 the chain carries Isoleucine amide. The propeptide occupies 210-219; it reads FSGSPRLQAK. A disordered region spans residues 212–240; the sequence is GSPRLQAKAVPRPRIGRQESQMREAKSAE. Isoleucine 226 is modified (isoleucine amide). The propeptide occupies 227-240; it reads GRQESQMREAKSAE. Basic and acidic residues predominate over residues 227–240; sequence GRQESQMREAKSAE.

As to expression, expressed in the pedal-buccal projection neurons in the pedal ganglion.

The protein resides in the secreted. Functionally, MMG2-DPs (Myomodulin gene 2-derived peptides) bias egestive feeding programs toward ingestive ones, and modulate accessory radula closer (ARC) muscle contractions. This chain is Myomodulin neuropeptides 2 (MMG2), found in Aplysia californica (California sea hare).